Consider the following 628-residue polypeptide: Chaperone protein HtpG (628 aa).

The interval 1-339 is a; substrate-binding; the sequence is MSNNQQTLGF…SNDLPLNVSR (339 aa). Positions 340-556 are b; the sequence is EILQDNKTTA…NDQMTTQMAK (217 aa). Positions 557-628 are c; the sequence is LFAMSGQPVP…IKRVNTLLAG (72 aa).

It belongs to the heat shock protein 90 family. As to quaternary structure, homodimer.

It is found in the cytoplasm. In terms of biological role, molecular chaperone. Has ATPase activity. The chain is Chaperone protein HtpG from Actinobacillus succinogenes (strain ATCC 55618 / DSM 22257 / CCUG 43843 / 130Z).